The sequence spans 788 residues: Pre-rRNA-processing protein TSR1 homolog (788 aa).

The interval 1 to 40 (MSTTGHRAGVFKKPAKPHKSWKGKRTKGEITTENRGREGV) is disordered. Residues 9 to 25 (GVFKKPAKPHKSWKGKR) show a composition bias toward basic residues. Positions 26–40 (TKGEITTENRGREGV) are enriched in basic and acidic residues. The Bms1-type G domain occupies 83 to 243 (APCLVTILSL…LRTLNETKKK (161 aa)). A disordered region spans residues 354-433 (LEEADKEMRR…ASEMMFHDEI (80 aa)). Positions 378-412 (DDSEDDEDEEDEDEDMDDEEEDKDLEEDDEEEDTP) are enriched in acidic residues.

This sequence belongs to the TRAFAC class translation factor GTPase superfamily. Bms1-like GTPase family. TSR1 subfamily.

Its subcellular location is the nucleus. It localises to the nucleolus. In terms of biological role, required during maturation of the 40S ribosomal subunit in the nucleolus. The polypeptide is Pre-rRNA-processing protein TSR1 homolog (Caenorhabditis briggsae).